Consider the following 372-residue polypeptide: Gibberellin 20 oxidase 1 (372 aa).

Residues 209–309 enclose the Fe2OG dioxygenase domain; that stretch reads RNDSIMRLNY…RRSLAFFLCP (101 aa). The Fe cation site is built by His234, Asp236, and His290. Arg300 is a catalytic residue.

This sequence belongs to the iron/ascorbate-dependent oxidoreductase family. GA20OX subfamily. It depends on Fe(2+) as a cofactor. Requires L-ascorbate as cofactor. Preferentially expressed in reproductive organs. Expressed in the epithelium of embryos and the tapetum of anthers. Expressed at low levels in the shoot apical meristem.

It carries out the reaction gibberellin A12 + 2 2-oxoglutarate + 3 O2 + H(+) = gibberellin A9 + 2 succinate + 3 CO2 + 2 H2O. The enzyme catalyses gibberellin A53 + 2 2-oxoglutarate + 3 O2 + H(+) = gibberellin A20 + 2 succinate + 3 CO2 + 2 H2O. Its function is as follows. Key oxidase enzyme in the biosynthesis of gibberellin. Catalyzes the conversion of GA12 and GA53 to GA9 and GA20 respectively, via a three-step oxidation at C-20 of the GA skeleton. The chain is Gibberellin 20 oxidase 1 from Oryza sativa subsp. japonica (Rice).